A 308-amino-acid chain; its full sequence is Small ribosomal subunit protein uS5c (308 aa).

A chloroplast-targeting transit peptide spans 1 to 55; it reads MATTATTTPSATSLTTLHRRIPLFPTTTTLLSLSSSSKPLFLSLSSTRSFPTHLY. The S5 DRBM domain occupies 152-215; it reads FEENVVQVRR…VDARRNIITV (64 aa).

As to quaternary structure, component of the chloroplast small ribosomal subunit (SSU). Mature 70S chloroplast ribosomes of higher plants consist of a small (30S) and a large (50S) subunit. The 30S small subunit contains 1 molecule of ribosomal RNA (16S rRNA) and 24 different proteins. The 50S large subunit contains 3 rRNA molecules (23S, 5S and 4.5S rRNA) and 33 different proteins. uS5c binds directly to 16S ribosomal RNA.

It localises to the plastid. It is found in the chloroplast. Component of the chloroplast ribosome (chloro-ribosome), a dedicated translation machinery responsible for the synthesis of chloroplast genome-encoded proteins, including proteins of the transcription and translation machinery and components of the photosynthetic apparatus. The chain is Small ribosomal subunit protein uS5c (rps5) from Spinacia oleracea (Spinach).